The following is a 493-amino-acid chain: Transmembrane protein 184 homolog DDB_G0284525 (493 aa).

Polar residues predominate over residues 1-10 (MTQESSSSNH). The interval 1–25 (MTQESSSSNHYVDESSFDNNNNNNN) is disordered. The next 7 helical transmembrane spans lie at 46-66 (VPAL…ATIL), 87-107 (IVRI…SLLL), 119-139 (DCYE…YGGG), 180-200 (YVLV…FGLY), 212-232 (FYNA…VVLF), 254-274 (IVVF…NFGW), and 293-313 (FLIC…FPYE). 2 N-linked (GlcNAc...) asparagine glycosylation sites follow: Asn415 and Asn416.

The protein belongs to the TMEM184 family.

It is found in the cell membrane. Functionally, probable transporter. This is Transmembrane protein 184 homolog DDB_G0284525 (tmem184A) from Dictyostelium discoideum (Social amoeba).